Here is a 578-residue protein sequence, read N- to C-terminus: 2-succinyl-5-enolpyruvyl-6-hydroxy-3-cyclohexene-1-carboxylate synthase (578 aa).

The protein belongs to the TPP enzyme family. MenD subfamily. In terms of assembly, homodimer. Requires Mg(2+) as cofactor. The cofactor is Mn(2+). Thiamine diphosphate is required as a cofactor.

It catalyses the reaction isochorismate + 2-oxoglutarate + H(+) = 5-enolpyruvoyl-6-hydroxy-2-succinyl-cyclohex-3-ene-1-carboxylate + CO2. The protein operates within quinol/quinone metabolism; 1,4-dihydroxy-2-naphthoate biosynthesis; 1,4-dihydroxy-2-naphthoate from chorismate: step 2/7. It participates in quinol/quinone metabolism; menaquinone biosynthesis. Its function is as follows. Catalyzes the thiamine diphosphate-dependent decarboxylation of 2-oxoglutarate and the subsequent addition of the resulting succinic semialdehyde-thiamine pyrophosphate anion to isochorismate to yield 2-succinyl-5-enolpyruvyl-6-hydroxy-3-cyclohexene-1-carboxylate (SEPHCHC). The protein is 2-succinyl-5-enolpyruvyl-6-hydroxy-3-cyclohexene-1-carboxylate synthase of Prosthecochloris aestuarii (strain DSM 271 / SK 413).